The chain runs to 402 residues: Sensor protein kinase FleS (402 aa).

In terms of domain architecture, Histidine kinase spans 188–393; that stretch reads SLAHQIRTPL…CATLILPLIP (206 aa). Position 191 is a phosphohistidine; by autocatalysis (histidine 191).

It catalyses the reaction ATP + protein L-histidine = ADP + protein N-phospho-L-histidine.. Member of the two-component regulatory system FleS/FleR that regulates the expression of multiple genes involved in flagellar synthesis, adhesion, swarming, motility and antibiotic resistance. May function as a membrane-associated protein kinase that phosphorylates FleR in response to environmental signals leading to activation of specific gene promoters. The chain is Sensor protein kinase FleS (fleS) from Pseudomonas aeruginosa (strain ATCC 15692 / DSM 22644 / CIP 104116 / JCM 14847 / LMG 12228 / 1C / PRS 101 / PAO1).